The primary structure comprises 116 residues: U30-theraphotoxin-Cg1b (116 aa).

An N-terminal signal peptide occupies residues 1–17 (MKLCVLTIATLLVTATS). Positions 18 to 53 (LETQKEIAEGNELTREETPSLVEHKEDEAAAASEKR) are excised as a propeptide. Residues 25-45 (AEGNELTREETPSLVEHKEDE) are disordered. 4 disulfide bridges follow: C55–C69, C62–C75, C66–C112, and C68–C88.

This sequence belongs to the neurotoxin 03 (Tx2) family. 02 subfamily. As to expression, expressed by the venom gland.

It localises to the secreted. Its function is as follows. Probable ion channel inhibitor. This is U30-theraphotoxin-Cg1b from Chilobrachys guangxiensis (Chinese earth tiger tarantula).